The chain runs to 55 residues: uncharacterized protein (55 aa).

This is an uncharacterized protein from Mycobacterium tuberculosis (strain ATCC 25618 / H37Rv).